The chain runs to 307 residues: Olfactory receptor 8K5 (307 aa).

The Extracellular portion of the chain corresponds to 1 to 25; the sequence is MGQHNLTVLTEFILMELTRRPELQI. N-linked (GlcNAc...) asparagine glycosylation is present at asparagine 5. A helical membrane pass occupies residues 26–46; it reads PLFGVFLVIYLITVVGNLTMI. Residues 47-54 lie on the Cytoplasmic side of the membrane; it reads ILTKLDSH. A helical transmembrane segment spans residues 55-75; the sequence is LHTPMYFSIRHLAFVDLGNST. Residues 76-99 are Extracellular-facing; it reads VICPKVLANFVVDRNTISYYACAA. A disulfide bridge connects residues cysteine 97 and cysteine 189. The helical transmembrane segment at 100-120 threads the bilayer; it reads QLAFFLMFIISEFFILSAMAY. The Cytoplasmic segment spans residues 121–139; that stretch reads DRYVAICNPLLYYVIMSQR. A helical membrane pass occupies residues 140–160; that stretch reads LCHVLVGIQYLYSTFQALMFT. Over 161–197 the chain is Extracellular; sequence IKIFTLTFCGSNVISHFYCDDVPLLPMLCSNAQEIEL. A helical membrane pass occupies residues 198–217; that stretch reads LSILFSVFNLISSFLIVLVS. Over 218–237 the chain is Cytoplasmic; the sequence is YMLILLAICQMHSAEGRKKA. A helical transmembrane segment spans residues 238–258; it reads FSTCGSHLTVVVVFYGSLLFM. At 259-271 the chain is on the extracellular side; the sequence is YMQPNSTHFFDTD. Asparagine 263 carries an N-linked (GlcNAc...) asparagine glycan. The chain crosses the membrane as a helical span at residues 272–292; sequence KMASVFYTLVIPMLNPLIYSL. Residues 293 to 307 lie on the Cytoplasmic side of the membrane; the sequence is RNEEVKNAFYKLFEN.

Belongs to the G-protein coupled receptor 1 family.

The protein resides in the cell membrane. Functionally, odorant receptor. The sequence is that of Olfactory receptor 8K5 (OR8K5) from Homo sapiens (Human).